Consider the following 279-residue polypeptide: Protein CMSS1 (279 aa).

Residues 1–10 are compositionally biased toward acidic residues; the sequence is MADDLGDEWW. Residues 1–89 are disordered; that stretch reads MADDLGDEWW…DVLAKSEPKP (89 aa). The segment covering 12–22 has biased composition (polar residues); that stretch reads NQPTGAGSSPE. Residues serine 19 and serine 24 each carry the phosphoserine modification. The residue at position 167 (arginine 167) is an Omega-N-methylarginine. Threonine 212 carries the phosphothreonine modification.

It belongs to the CMS1 family.

In Homo sapiens (Human), this protein is Protein CMSS1 (CMSS1).